We begin with the raw amino-acid sequence, 417 residues long: Histidine--tRNA ligase (417 aa).

The protein belongs to the class-II aminoacyl-tRNA synthetase family. In terms of assembly, homodimer.

Its subcellular location is the cytoplasm. It carries out the reaction tRNA(His) + L-histidine + ATP = L-histidyl-tRNA(His) + AMP + diphosphate + H(+). This Caldanaerobacter subterraneus subsp. tengcongensis (strain DSM 15242 / JCM 11007 / NBRC 100824 / MB4) (Thermoanaerobacter tengcongensis) protein is Histidine--tRNA ligase.